Consider the following 432-residue polypeptide: Gamma-glutamyl phosphate reductase (432 aa).

The protein belongs to the gamma-glutamyl phosphate reductase family.

The protein resides in the cytoplasm. The enzyme catalyses L-glutamate 5-semialdehyde + phosphate + NADP(+) = L-glutamyl 5-phosphate + NADPH + H(+). It functions in the pathway amino-acid biosynthesis; L-proline biosynthesis; L-glutamate 5-semialdehyde from L-glutamate: step 2/2. Its function is as follows. Catalyzes the NADPH-dependent reduction of L-glutamate 5-phosphate into L-glutamate 5-semialdehyde and phosphate. The product spontaneously undergoes cyclization to form 1-pyrroline-5-carboxylate. The chain is Gamma-glutamyl phosphate reductase from Deinococcus radiodurans (strain ATCC 13939 / DSM 20539 / JCM 16871 / CCUG 27074 / LMG 4051 / NBRC 15346 / NCIMB 9279 / VKM B-1422 / R1).